The sequence spans 741 residues: Lamin-B receptor (741 aa).

The tract at residues 29 to 126 (RLRRPRRTED…TGSGSGSSLP (98 aa)) is disordered. Low complexity-rich tracts occupy residues 57–84 (TRRTGSVTAAGATATATATAGPATRTRA) and 109–126 (PRSSVGPLTGSGSGSSLP). Ser-111 bears the Phosphoserine mark. Position 135 is a phosphothreonine (Thr-135). Ser-144 is modified (phosphoserine). The segment covering 160–184 (TNTSSGAPNKAFNTSSVNSGNSFSR) has biased composition (polar residues). The segment at 160 to 194 (TNTSSGAPNKAFNTSSVNSGNSFSRTTTSSTTTTT) is disordered. Residues 185-194 (TTTSSTTTTT) show a composition bias toward low complexity. Ser-223 and Ser-225 each carry phosphoserine. Polar residues predominate over residues 231 to 240 (LAGTPVTNTE). The tract at residues 231 to 277 (LAGTPVTNTEEGSRYSRSVSRSVYDDEKSSKRSYSTGEEDIDEEDEL) is disordered. A phosphothreonine mark is found at Thr-234 and Thr-237. Residues Ser-243, Ser-246, Ser-248, Ser-250, and Ser-263 each carry the phosphoserine modification. Thr-266 carries the phosphothreonine modification. Positions 267 to 277 (GEEDIDEEDEL) are enriched in acidic residues. Position 284 is a phosphoserine (Ser-284). At Thr-288 the chain carries Phosphothreonine. At Ser-291 the chain carries Phosphoserine. Thr-293 carries the post-translational modification Phosphothreonine. Phosphoserine is present on Ser-298. A run of 8 helical transmembrane segments spans residues 308–328 (FGGWLGAFLFLLLLPTAVYYL), 363–383 (VVGAFAAYQVVVFLLVALLPG), 402–422 (LTLLIASGVAEYLKYPVVTFV), 429–449 (FCIFGLVGAFVAAAWSYWLVD), 497–517 (LSLVTTLIYATCYIYQTLVWP), 543–563 (PATLFSASCLLFYVLDAIIFE), 577–599 (YGCLLLLRYAATPYLLTAVTKYF), and 604–624 (VPISCWYAPLAVAALLSLGLL). Phosphoserine occurs at positions 640 and 642. The chain crosses the membrane as a helical span at residues 687–707 (MALRPAWPPVLGLSLIILLLL).

This sequence belongs to the ERG4/ERG24 family. As to quaternary structure, interacts directly with LAM.

The protein localises to the nucleus inner membrane. Functionally, anchors the lamina and the heterochromatin to the inner nuclear membrane. The polypeptide is Lamin-B receptor (Drosophila melanogaster (Fruit fly)).